Here is a 241-residue protein sequence, read N- to C-terminus: PRA1 family protein H (241 aa).

The next 3 membrane-spanning stretches (helical) occupy residues 142–162 (LFIV…VGLL), 189–205 (LSIG…LTFL), and 209–228 (MALF…HAGF).

This sequence belongs to the PRA1 family.

It localises to the endoplasmic reticulum membrane. In terms of biological role, may be involved in both secretory and endocytic intracellular trafficking in the endosomal/prevacuolar compartments. The chain is PRA1 family protein H (PRA1H) from Arabidopsis thaliana (Mouse-ear cress).